The following is a 554-amino-acid chain: Dihydroxy-acid dehydratase (554 aa).

D78 serves as a coordination point for Mg(2+). Residue C119 coordinates [2Fe-2S] cluster. Residues D120 and K121 each coordinate Mg(2+). Residue K121 is modified to N6-carboxylysine. C192 serves as a coordination point for [2Fe-2S] cluster. A Mg(2+)-binding site is contributed by E443. The active-site Proton acceptor is S469.

Belongs to the IlvD/Edd family. Homodimer. The cofactor is [2Fe-2S] cluster. Mg(2+) serves as cofactor.

It catalyses the reaction (2R)-2,3-dihydroxy-3-methylbutanoate = 3-methyl-2-oxobutanoate + H2O. It carries out the reaction (2R,3R)-2,3-dihydroxy-3-methylpentanoate = (S)-3-methyl-2-oxopentanoate + H2O. It participates in amino-acid biosynthesis; L-isoleucine biosynthesis; L-isoleucine from 2-oxobutanoate: step 3/4. It functions in the pathway amino-acid biosynthesis; L-valine biosynthesis; L-valine from pyruvate: step 3/4. Its function is as follows. Functions in the biosynthesis of branched-chain amino acids. Catalyzes the dehydration of (2R,3R)-2,3-dihydroxy-3-methylpentanoate (2,3-dihydroxy-3-methylvalerate) into 2-oxo-3-methylpentanoate (2-oxo-3-methylvalerate) and of (2R)-2,3-dihydroxy-3-methylbutanoate (2,3-dihydroxyisovalerate) into 2-oxo-3-methylbutanoate (2-oxoisovalerate), the penultimate precursor to L-isoleucine and L-valine, respectively. The polypeptide is Dihydroxy-acid dehydratase (Shouchella clausii (strain KSM-K16) (Alkalihalobacillus clausii)).